The primary structure comprises 52 residues: UPF0057 membrane protein PA0567 (52 aa).

2 consecutive transmembrane segments (helical) span residues 6–26 and 29–49; these read ILIAILLPPLGVFLQVGFGGA and LNILLTLLGYIPGIVHAVYII.

Belongs to the UPF0057 (PMP3) family.

The protein localises to the cell membrane. This chain is UPF0057 membrane protein PA0567, found in Pseudomonas aeruginosa (strain ATCC 15692 / DSM 22644 / CIP 104116 / JCM 14847 / LMG 12228 / 1C / PRS 101 / PAO1).